A 391-amino-acid chain; its full sequence is Secreted aspartic protease 1 (391 aa).

Positions 1 to 18 (MFLKNIFIALAIALLVDA) are cleaved as a signal peptide. Residues 19–50 (SPAKRSPGFVTLDFDVIKTPVNATGQEGKVKR) constitute a propeptide, activation peptide. Residue Asn40 is glycosylated (N-linked (GlcNAc...) asparagine). In terms of domain architecture, Peptidase A1 spans 64-377 (YAADITIGSN…DLDDDKISLA (314 aa)). Residue Asp82 is part of the active site. Pepstatin A is bound at residue 82 to 84 (DTG). Residues Cys97 and Cys109 are joined by a disulfide bond. 135 to 136 (GD) serves as a coordination point for pepstatin A. The Zn(2+) site is built by Asp241 and Asp263. Asp267 is an active-site residue. 267–271 (DSGTT) is a pepstatin A binding site. A disulfide bridge connects residues Cys305 and Cys343.

The protein belongs to the peptidase A1 family. Monomer.

It is found in the secreted. It carries out the reaction Preferential cleavage at the carboxyl of hydrophobic amino acids, but fails to cleave 15-Leu-|-Tyr-16, 16-Tyr-|-Leu-17 and 24-Phe-|-Phe-25 of insulin B chain. Activates trypsinogen, and degrades keratin.. Inhibited by pepstatin A analogs and squash aspartic peptidase inhibitor (SQAPI). Secreted aspartic peptidases (SAPs) are a group of ten acidic hydrolases considered as key virulence factors. These enzymes supply the fungus with nutrient amino acids as well as are able to degrade the selected host's proteins involved in the immune defense. Induces host inflammatory cytokine production in a proteolytic activity-independent way. Plays a role in tissue damage during superficial infection. Moreover, acts toward human hemoglobin though limited proteolysis to generate a variety of antimicrobial hemocidins, enabling to compete with the other microorganisms of the same physiological niche using the microbicidal peptides generated from the host protein. In terms of biological role, plays a key role in defense against host by cleaving histatin-5 (Hst 5), a peptide from human saliva that carries out fungicidal activity. The cleavage rate decreases in an order of SAP2 &gt; SAP9 &gt; SAP3 &gt; SAP7 &gt; SAP4 &gt; SAP1 &gt; SAP8. The first cleavage occurs between residues 'Lys-17' and 'His-18' of Hst 5, giving DSHAKRHHGYKRKFHEK and HHSHRGY peptides. Further fragmentation by SAP1 results in AKRHHGYKRKFHEK and AKRHHGY products. This Candida albicans (strain SC5314 / ATCC MYA-2876) (Yeast) protein is Secreted aspartic protease 1.